We begin with the raw amino-acid sequence, 400 residues long: Argininosuccinate synthase (400 aa).

ATP is bound at residue 8–16 (AYSGGLDTS). L-citrulline is bound at residue Y87. G117 contacts ATP. Residues T119, N123, and D124 each contribute to the L-aspartate site. N123 lines the L-citrulline pocket. L-citrulline-binding residues include R127, S175, E260, and Y272.

Belongs to the argininosuccinate synthase family. Type 1 subfamily. In terms of assembly, homotetramer.

It is found in the cytoplasm. The enzyme catalyses L-citrulline + L-aspartate + ATP = 2-(N(omega)-L-arginino)succinate + AMP + diphosphate + H(+). It participates in amino-acid biosynthesis; L-arginine biosynthesis; L-arginine from L-ornithine and carbamoyl phosphate: step 2/3. This Nocardia farcinica (strain IFM 10152) protein is Argininosuccinate synthase.